Consider the following 417-residue polypeptide: Gamma-glutamyl phosphate reductase (417 aa).

It belongs to the gamma-glutamyl phosphate reductase family.

Its subcellular location is the cytoplasm. The enzyme catalyses L-glutamate 5-semialdehyde + phosphate + NADP(+) = L-glutamyl 5-phosphate + NADPH + H(+). It participates in amino-acid biosynthesis; L-proline biosynthesis; L-glutamate 5-semialdehyde from L-glutamate: step 2/2. Its function is as follows. Catalyzes the NADPH-dependent reduction of L-glutamate 5-phosphate into L-glutamate 5-semialdehyde and phosphate. The product spontaneously undergoes cyclization to form 1-pyrroline-5-carboxylate. The sequence is that of Gamma-glutamyl phosphate reductase from Phocaeicola vulgatus (strain ATCC 8482 / DSM 1447 / JCM 5826 / CCUG 4940 / NBRC 14291 / NCTC 11154) (Bacteroides vulgatus).